We begin with the raw amino-acid sequence, 396 residues long: Cysteine protease ATG4A (396 aa).

Cys-77 functions as the Nucleophile in the catalytic mechanism. Active-site residues include Asp-276 and His-278. Positions 390–393 (FEIL) match the LIR motif.

This sequence belongs to the peptidase C54 family. Interacts with ATG9A; the interaction is direct.

It localises to the cytoplasm. It catalyses the reaction [protein]-C-terminal L-amino acid-glycyl-phosphatidylethanolamide + H2O = [protein]-C-terminal L-amino acid-glycine + a 1,2-diacyl-sn-glycero-3-phosphoethanolamine. With respect to regulation, inhibited by N-ethylmaleimide. Redox-regulated during autophagy since reducing conditions activate ATG4A whereas an oxidizing environment such as the presence of H(2)O(2) inhibits its activity. Its function is as follows. Cysteine protease that plays a key role in autophagy by mediating both proteolytic activation and delipidation of ATG8 family proteins. The protease activity is required for proteolytic activation of ATG8 family proteins: cleaves the C-terminal amino acid of ATG8 proteins to reveal a C-terminal glycine. Exposure of the glycine at the C-terminus is essential for ATG8 proteins conjugation to phosphatidylethanolamine (PE) and insertion to membranes, which is necessary for autophagy. Preferred substrate is GABARAPL2 followed by MAP1LC3A and GABARAP. Protease activity is also required to counteract formation of high-molecular weight conjugates of ATG8 proteins (ATG8ylation): acts as a deubiquitinating-like enzyme that removes ATG8 conjugated to other proteins, such as ATG3. In addition to the protease activity, also mediates delipidation of ATG8 family proteins. Catalyzes delipidation of PE-conjugated forms of ATG8 proteins during macroautophagy. Compared to ATG4B, the major protein for proteolytic activation of ATG8 proteins, shows weaker ability to cleave the C-terminal amino acid of ATG8 proteins, while it displays stronger delipidation activity. Involved in phagophore growth during mitophagy independently of its protease activity and of ATG8 proteins: acts by regulating ATG9A trafficking to mitochondria and promoting phagophore-endoplasmic reticulum contacts during the lipid transfer phase of mitophagy. This chain is Cysteine protease ATG4A, found in Mus musculus (Mouse).